The following is an 833-amino-acid chain: Neurogenic locus protein delta (833 aa).

Positions methionine 1–valine 18 are cleaved as a signal peptide. Residues glutamine 19–glutamine 594 are Extracellular-facing. 2 cysteine pairs are disulfide-bonded: cysteine 46–cysteine 61 and cysteine 68–cysteine 82. N-linked (GlcNAc...) asparagine glycans are attached at residues asparagine 98, asparagine 137, and asparagine 167. The 45-residue stretch at valine 182–cysteine 226 folds into the DSL domain. Disulfide bonds link cysteine 184/cysteine 193, cysteine 197/cysteine 209, cysteine 217/cysteine 226, cysteine 231/cysteine 240, cysteine 235/cysteine 246, cysteine 248/cysteine 257, cysteine 260/cysteine 271, cysteine 266/cysteine 277, cysteine 279/cysteine 288, cysteine 295/cysteine 307, cysteine 301/cysteine 317, cysteine 319/cysteine 328, cysteine 335/cysteine 348, cysteine 342/cysteine 360, cysteine 362/cysteine 371, cysteine 378/cysteine 388, cysteine 383/cysteine 404, cysteine 406/cysteine 415, cysteine 422/cysteine 433, cysteine 427/cysteine 439, cysteine 441/cysteine 450, cysteine 457/cysteine 468, cysteine 462/cysteine 477, cysteine 479/cysteine 488, cysteine 495/cysteine 506, cysteine 500/cysteine 515, cysteine 517/cysteine 526, cysteine 533/cysteine 544, cysteine 538/cysteine 553, and cysteine 555/cysteine 564. EGF-like domains are found at residues histidine 227–asparagine 258, leucine 256–asparagine 289, aspartate 291–glutamate 329, glutamate 331–glutamate 372, lysine 374–aspartate 416, and glutamine 418–glutamate 451. The 37-residue stretch at asparagine 453 to serine 489 folds into the EGF-like 7; calcium-binding domain. The EGF-like 8 domain occupies lysine 491 to serine 527. The 37-residue stretch at aspartate 529–aspartate 565 folds into the EGF-like 9; calcium-binding domain. The chain crosses the membrane as a helical span at residues valine 595–phenylalanine 617. Residues cysteine 618–methionine 833 lie on the Cytoplasmic side of the membrane. Phosphothreonine is present on threonine 666. Residues glutamine 743 to glutamate 773 are disordered. Residues glycine 754–glycine 763 show a composition bias toward low complexity.

Interacts with Notch (N) via the EGF repeats and the N EGF repeats. Post-translationally, ubiquitinated by Mib, leading to its endocytosis and subsequent degradation. As to expression, detected in all areas with neurogenic abilities, for example the neurogenic ectoderm and the primordia of the sense organs. Later expression is restricted to those cells that have adopted a neural fate.

Its subcellular location is the membrane. In terms of biological role, acts as a ligand for Notch (N) receptor. Essential for proper differentiation of ectoderm. Delta is required for the correct separation of neural and epidermal cell lineages. Fringe (fng) acts in the Golgi to determine the type of O-linked fucose on the EGF modules in N, altering the ability of N to bind with Delta. O-fut1 also has a role in modulating the interaction. In Drosophila melanogaster (Fruit fly), this protein is Neurogenic locus protein delta.